A 160-amino-acid polypeptide reads, in one-letter code: RNA-binding protein 3 (160 aa).

Residues 6 to 84 form the RRM domain; the sequence is GKLFVGGLNF…RQIRVDHAGK (79 aa). Omega-N-methylarginine is present on arginine 47. A disordered region spans residues 81-116; that stretch reads HAGKSARGSRGGAFGSYERGRGYPRGGGDQGYGSGR. Residues 103–114 are compositionally biased toward gly residues; sequence YPRGGGDQGYGS. Position 105 is an asymmetric dimethylarginine; alternate (arginine 105). Arginine 105 is subject to Dimethylated arginine; alternate. Residue arginine 105 is modified to Omega-N-methylarginine; alternate. Omega-N-methylarginine is present on residues arginine 120 and arginine 134. The tract at residues 135 to 160 is disordered; sequence SRDYGGRSQGGYDRYSGGNYRDNYDN. Serine 150 carries the post-translational modification Phosphoserine. Tyrosine 158 is modified (phosphotyrosine).

Interacts with RPL4. Associates with the 60S ribosomal subunits.

The protein resides in the nucleus. It is found in the cytoplasm. It localises to the cell projection. Its subcellular location is the dendrite. In terms of biological role, cold-inducible mRNA binding protein that enhances global protein synthesis at both physiological and mild hypothermic temperatures. Reduces the relative abundance of microRNAs, when overexpressed. Enhances phosphorylation of translation initiation factors and active polysome formation. The sequence is that of RNA-binding protein 3 from Capra hircus (Goat).